We begin with the raw amino-acid sequence, 73 residues long: U-scoloptoxin(15)-Sm2a (73 aa).

An N-terminal signal peptide occupies residues 1–20 (MKFYIVFCLFVVLLINFAAA). 2 disulfides stabilise this stretch: Cys39–Cys66 and Cys43–Cys68.

It belongs to the scoloptoxin-15 family. In terms of tissue distribution, expressed by the venom gland.

The protein localises to the secreted. Its function is as follows. Activity unknown, even that a lot of targets (Kv, Nav, Cav) have been tested and activities on insects and mice have been tested. This chain is U-scoloptoxin(15)-Sm2a, found in Scolopendra morsitans (Tanzanian blue ringleg centipede).